The following is a 574-amino-acid chain: Probable glucomannan 4-beta-mannosyltransferase 6 (574 aa).

The chain crosses the membrane as a helical span at residues 87–107; that stretch reads VVACMVMSVIVLAEKVFLGVV. The active site involves Asp-180. Substrate-binding residues include Asp-239 and Asp-241. The active site involves Asp-333. 4 helical membrane-spanning segments follow: residues 412–432, 437–457, 523–543, and 548–568; these read IIST…KVFF, IPLW…SVGT, FHCL…YDYL, and IFYI…FEFM.

The protein belongs to the glycosyltransferase 2 family. Plant cellulose synthase-like A subfamily.

The protein localises to the golgi apparatus membrane. The catalysed reaction is GDP-mannose + (glucomannan)n = GDP + (glucomannan)n+1.. Probable mannan synthase which consists of a 4-beta-mannosyltransferase activity on mannan using GDP-mannose. The beta-1,4-mannan product is the backbone for galactomannan synthesis by galactomannan galactosyltransferase. Galactomannan is a noncellulosic polysaccharides of plant cell wall. The sequence is that of Probable glucomannan 4-beta-mannosyltransferase 6 from Oryza sativa subsp. japonica (Rice).